A 590-amino-acid polypeptide reads, in one-letter code: Aspartate--tRNA(Asp/Asn) ligase (590 aa).

L-aspartate is bound at residue Glu-172. Positions 196 to 199 are aspartate; the sequence is QLFK. Position 218 (Arg-218) interacts with L-aspartate. ATP-binding positions include 218 to 220 and Gln-227; that span reads RDE. His-449 lines the L-aspartate pocket. Glu-484 lines the ATP pocket. Arg-491 contacts L-aspartate. 536–539 contributes to the ATP binding site; that stretch reads GVDR.

This sequence belongs to the class-II aminoacyl-tRNA synthetase family. Type 1 subfamily. In terms of assembly, homodimer.

The protein localises to the cytoplasm. The catalysed reaction is tRNA(Asx) + L-aspartate + ATP = L-aspartyl-tRNA(Asx) + AMP + diphosphate. Functionally, aspartyl-tRNA synthetase with relaxed tRNA specificity since it is able to aspartylate not only its cognate tRNA(Asp) but also tRNA(Asn). Reaction proceeds in two steps: L-aspartate is first activated by ATP to form Asp-AMP and then transferred to the acceptor end of tRNA(Asp/Asn). This is Aspartate--tRNA(Asp/Asn) ligase from Francisella tularensis subsp. tularensis (strain WY96-3418).